The sequence spans 894 residues: DNA mismatch repair protein MutS (894 aa).

629 to 636 (GPNMGGKS) contacts ATP. The interval 819–840 (TPTPQLDLFAPPPHPDTSDDDE) is disordered.

This sequence belongs to the DNA mismatch repair MutS family.

Functionally, this protein is involved in the repair of mismatches in DNA. It is possible that it carries out the mismatch recognition step. This protein has a weak ATPase activity. The protein is DNA mismatch repair protein MutS of Cupriavidus pinatubonensis (strain JMP 134 / LMG 1197) (Cupriavidus necator (strain JMP 134)).